Here is a 64-residue protein sequence, read N- to C-terminus: Small cysteine-rich protein (64 aa).

The signal sequence occupies residues Phe1–Thr17. Residues Pro18–Glu19 constitute a propeptide that is removed on maturation.

Post-translationally, contains 4 disulfide bonds.

Its subcellular location is the secreted. It localises to the nematocyst. The chain is Small cysteine-rich protein from Anemonia viridis (Snakelocks anemone).